The primary structure comprises 243 residues: 23S rRNA (guanosine-2'-O-)-methyltransferase RlmB (243 aa).

Positions 196, 216, and 225 each coordinate S-adenosyl-L-methionine.

It belongs to the class IV-like SAM-binding methyltransferase superfamily. RNA methyltransferase TrmH family. RlmB subfamily. As to quaternary structure, homodimer.

It localises to the cytoplasm. The catalysed reaction is guanosine(2251) in 23S rRNA + S-adenosyl-L-methionine = 2'-O-methylguanosine(2251) in 23S rRNA + S-adenosyl-L-homocysteine + H(+). Its function is as follows. Specifically methylates the ribose of guanosine 2251 in 23S rRNA. This is 23S rRNA (guanosine-2'-O-)-methyltransferase RlmB from Salmonella typhi.